The chain runs to 360 residues: MKNIFLHSLIVENYRNFKNLELKTDNIPITIIGENGSGKTNILEAISLFYPGRGLRSARLADICRESEDHCSVRALLQSKLGLAEFSTQIKRISNRRTTEYNNSKIANNELSKFTSMVWLTPQMEGIFMSGTSDRRKFFDRIVYNFDPKHAELVSKYEHYMQERNKILAEDMWDNNWLKTIEEKMADTSIYIANNRLKTLEFMQQAIDDLENEFPKAELSIDGMVEQKILNGEEDVVGFIAAELHKTRDKDKLLGRTSFGVHKSDFLVKHKHKNILAKFCSTGEQKAILIAIILAEMNYAIKLTKTAPILLLDEVFVHLDDRRRNYLTEFFISINLQLWVTATDLKGIEEFGNKSQLIKL.

Position 33–40 (33–40 (GENGSGKT)) interacts with ATP.

This sequence belongs to the RecF family.

It is found in the cytoplasm. Its function is as follows. The RecF protein is involved in DNA metabolism; it is required for DNA replication and normal SOS inducibility. RecF binds preferentially to single-stranded, linear DNA. It also seems to bind ATP. This is DNA replication and repair protein RecF from Rickettsia bellii (strain OSU 85-389).